Reading from the N-terminus, the 396-residue chain is UPF0164 protein TP_0858 (396 aa).

An N-terminal signal peptide occupies residues 1 to 28 (MGTMIRHTFTHRCGALLCALALGSSTMA).

This sequence belongs to the UPF0164 family.

The polypeptide is UPF0164 protein TP_0858 (Treponema pallidum (strain Nichols)).